We begin with the raw amino-acid sequence, 926 residues long: Protein transport protein SEC24-2 (926 aa).

The interval 1 to 54 (MSHHKKRVYPQAQAQYGQSATPLQQPAQLVPPQDPAAAGMSYAQMGMPPQGAAA) is disordered. Over residues 20–54 (ATPLQQPAQLVPPQDPAAAGMSYAQMGMPPQGAAA) the composition is skewed to low complexity. Cys231, Cys234, Cys253, and Cys256 together coordinate Zn(2+). The segment at 231–256 (CRRCRSYMNPFITFIEQGRRWRCNFC) is zinc finger-like.

The protein belongs to the SEC23/SEC24 family. SEC24 subfamily. In terms of assembly, the COPII coat is composed of at least 5 proteins: the SEC23/24 complex, the SEC13/31 complex, and the protein SAR1. Golgi apparatus membrane; Peripheral membrane protein; Cytoplasmic side.

The protein localises to the cytoplasm. It localises to the cytoplasmic vesicle. The protein resides in the COPII-coated vesicle membrane. Its subcellular location is the endoplasmic reticulum membrane. It is found in the golgi apparatus membrane. Functionally, component of the coat protein complex II (COPII) which promotes the formation of transport vesicles from the endoplasmic reticulum (ER). The coat has two main functions, the physical deformation of the endoplasmic reticulum membrane into vesicles and the selection of cargo molecules. This Saccharomyces uvarum (strain ATCC 76518 / CBS 7001 / CLIB 283 / NBRC 10550 / MCYC 623 / NCYC 2669 / NRRL Y-11845) (Yeast) protein is Protein transport protein SEC24-2 (SEC242).